Here is a 96-residue protein sequence, read N- to C-terminus: Protein RnfH (96 aa).

It belongs to the UPF0125 (RnfH) family.

The sequence is that of Protein RnfH from Escherichia fergusonii (strain ATCC 35469 / DSM 13698 / CCUG 18766 / IAM 14443 / JCM 21226 / LMG 7866 / NBRC 102419 / NCTC 12128 / CDC 0568-73).